A 147-amino-acid chain; its full sequence is Hemoglobin subunit beta-1 (147 aa).

The region spanning 3 to 147 (EWTAAERRHV…VVSALGRQYH (145 aa)) is the Globin domain. Positions 64 and 93 each coordinate heme b.

It belongs to the globin family. Hb 1 is a heterotetramer of two alpha-1 and two beta-1 chains. In terms of tissue distribution, red blood cells.

In terms of biological role, involved in oxygen transport from gills to the various peripheral tissues. The protein is Hemoglobin subunit beta-1 (hbb1) of Gadus morhua (Atlantic cod).